We begin with the raw amino-acid sequence, 171 residues long: Co-chaperone protein HscB (171 aa).

In terms of domain architecture, J spans 2–74 (DYFTLFGLPA…LMRAEYLLSL (73 aa)).

This sequence belongs to the HscB family. In terms of assembly, interacts with HscA and stimulates its ATPase activity. Interacts with IscU.

In terms of biological role, co-chaperone involved in the maturation of iron-sulfur cluster-containing proteins. Seems to help targeting proteins to be folded toward HscA. This chain is Co-chaperone protein HscB, found in Escherichia coli (strain SE11).